The following is a 425-amino-acid chain: Glutamyl-tRNA reductase (425 aa).

Substrate contacts are provided by residues 49 to 52 (TCNR), Ser109, 114 to 116 (EGQ), and Gln120. The active-site Nucleophile is the Cys50. 189–194 (GAGETG) serves as a coordination point for NADP(+).

Belongs to the glutamyl-tRNA reductase family. In terms of assembly, homodimer.

The enzyme catalyses (S)-4-amino-5-oxopentanoate + tRNA(Glu) + NADP(+) = L-glutamyl-tRNA(Glu) + NADPH + H(+). It functions in the pathway porphyrin-containing compound metabolism; protoporphyrin-IX biosynthesis; 5-aminolevulinate from L-glutamyl-tRNA(Glu): step 1/2. Its pathway is porphyrin-containing compound metabolism; chlorophyll biosynthesis. Functionally, catalyzes the NADPH-dependent reduction of glutamyl-tRNA(Glu) to glutamate 1-semialdehyde (GSA). In Chlorobium phaeovibrioides (strain DSM 265 / 1930) (Prosthecochloris vibrioformis (strain DSM 265)), this protein is Glutamyl-tRNA reductase.